Reading from the N-terminus, the 390-residue chain is Acetylornithine aminotransferase (390 aa).

Residues 103 to 104 and Phe129 each bind pyridoxal 5'-phosphate; that span reads GT. Arg132 contributes to the N(2)-acetyl-L-ornithine binding site. Residue 214–217 participates in pyridoxal 5'-phosphate binding; sequence DEVQ. N6-(pyridoxal phosphate)lysine is present on Lys243. Ser271 contacts N(2)-acetyl-L-ornithine. Thr272 contributes to the pyridoxal 5'-phosphate binding site. An Isoglutamyl lysine isopeptide (Lys-Gln) (interchain with Q-Cter in protein Pup) cross-link involves residue Lys304.

It belongs to the class-III pyridoxal-phosphate-dependent aminotransferase family. ArgD subfamily. As to quaternary structure, homodimer. It depends on pyridoxal 5'-phosphate as a cofactor.

The protein resides in the cytoplasm. It catalyses the reaction N(2)-acetyl-L-ornithine + 2-oxoglutarate = N-acetyl-L-glutamate 5-semialdehyde + L-glutamate. It functions in the pathway amino-acid biosynthesis; L-arginine biosynthesis; N(2)-acetyl-L-ornithine from L-glutamate: step 4/4. The sequence is that of Acetylornithine aminotransferase from Mycolicibacterium smegmatis (strain ATCC 700084 / mc(2)155) (Mycobacterium smegmatis).